The following is a 65-amino-acid chain: uncharacterized protein (65 aa).

Transmembrane regions (helical) follow at residues 4–24 (TIWL…MLYP) and 45–65 (FGGG…KTIG).

It localises to the cell membrane. This is an uncharacterized protein from Escherichia coli O157:H7.